We begin with the raw amino-acid sequence, 226 residues long: Enolase-phosphatase E1 (226 aa).

The protein belongs to the HAD-like hydrolase superfamily. MasA/MtnC family. As to quaternary structure, monomer. Mg(2+) serves as cofactor.

The enzyme catalyses 5-methylsulfanyl-2,3-dioxopentyl phosphate + H2O = 1,2-dihydroxy-5-(methylsulfanyl)pent-1-en-3-one + phosphate. Its pathway is amino-acid biosynthesis; L-methionine biosynthesis via salvage pathway; L-methionine from S-methyl-5-thio-alpha-D-ribose 1-phosphate: step 3/6. The protein operates within amino-acid biosynthesis; L-methionine biosynthesis via salvage pathway; L-methionine from S-methyl-5-thio-alpha-D-ribose 1-phosphate: step 4/6. Functionally, bifunctional enzyme that catalyzes the enolization of 2,3-diketo-5-methylthiopentyl-1-phosphate (DK-MTP-1-P) into the intermediate 2-hydroxy-3-keto-5-methylthiopentenyl-1-phosphate (HK-MTPenyl-1-P), which is then dephosphorylated to form the acireductone 1,2-dihydroxy-3-keto-5-methylthiopentene (DHK-MTPene). The chain is Enolase-phosphatase E1 from Shewanella baltica (strain OS195).